We begin with the raw amino-acid sequence, 234 residues long: Ubiquitin thioesterase OTUB2 (234 aa).

One can recognise an OTU domain in the interval 40 to 231 (TAIRKTKGDG…TSHYNILYAA (192 aa)). Residue aspartate 48 is part of the active site. The active-site Nucleophile is the cysteine 51. Histidine 224 is a catalytic residue.

The protein belongs to the peptidase C65 family. As to expression, widely expressed. Expressed at higher level in brain.

The catalysed reaction is Thiol-dependent hydrolysis of ester, thioester, amide, peptide and isopeptide bonds formed by the C-terminal Gly of ubiquitin (a 76-residue protein attached to proteins as an intracellular targeting signal).. Functionally, hydrolase that can remove conjugated ubiquitin from proteins in vitro and may therefore play an important regulatory role at the level of protein turnover by preventing degradation. Mediates deubiquitination of 'Lys-11'-,'Lys-48'- and 'Lys-63'-linked polyubiquitin chains, with a preference for 'Lys-63'-linked polyubiquitin chains. This is Ubiquitin thioesterase OTUB2 (OTUB2) from Homo sapiens (Human).